A 499-amino-acid chain; its full sequence is Cobyric acid synthase (499 aa).

Positions 251-442 (SLDIAVVSLK…LHGVFDNLEW (192 aa)) constitute a GATase cobBQ-type domain. The active-site Nucleophile is the Cys-332. His-434 is a catalytic residue.

The protein belongs to the CobB/CobQ family. CobQ subfamily.

It functions in the pathway cofactor biosynthesis; adenosylcobalamin biosynthesis. In terms of biological role, catalyzes amidations at positions B, D, E, and G on adenosylcobyrinic A,C-diamide. NH(2) groups are provided by glutamine, and one molecule of ATP is hydrogenolyzed for each amidation. The chain is Cobyric acid synthase from Streptococcus sanguinis (strain SK36).